Reading from the N-terminus, the 1388-residue chain is Dicer-like protein 2 (1388 aa).

One can recognise a Helicase ATP-binding domain in the interval 23-203 (MLEASMKENI…LLTVESNLDA (181 aa)). 36 to 43 (MDTGSGKT) is a binding site for ATP. The short motif at 144–147 (DEAH) is the DEAH box element. The Helicase C-terminal domain maps to 371 to 537 (SLLNFLDSLD…DDERQLQSVS (167 aa)). The Dicer dsRNA-binding fold domain occupies 564-658 (AMAHLHHFCA…LPLTKRPELK (95 aa)). RNase III domains follow at residues 919 to 1059 (ATRL…MDGG) and 1098 to 1281 (NERL…VDSG). Residues glutamate 1137, aspartate 1267, and glutamate 1270 each coordinate Mg(2+).

Belongs to the helicase family. Dicer subfamily. Requires Mg(2+) as cofactor. Mn(2+) serves as cofactor.

In terms of biological role, dicer-like endonuclease involved in cleaving double-stranded RNA in the RNA interference (RNAi) pathway. Produces 21 to 25 bp dsRNAs (siRNAs) which target the selective destruction of homologous RNAs leading to sequence-specific suppression of gene expression, called post-transcriptional gene silencing (PTGS). Part of a broad host defense response against viral infection and transposons. The chain is Dicer-like protein 2 (dcl2) from Neosartorya fischeri (strain ATCC 1020 / DSM 3700 / CBS 544.65 / FGSC A1164 / JCM 1740 / NRRL 181 / WB 181) (Aspergillus fischerianus).